Consider the following 92-residue polypeptide: Small ribosomal subunit protein uS19c (92 aa).

This sequence belongs to the universal ribosomal protein uS19 family.

It localises to the plastid. Its subcellular location is the chloroplast. Functionally, protein S19 forms a complex with S13 that binds strongly to the 16S ribosomal RNA. This Populus alba (White poplar) protein is Small ribosomal subunit protein uS19c.